Reading from the N-terminus, the 104-residue chain is Flagellar hook-basal body complex protein FliE (104 aa).

The protein belongs to the FliE family.

It localises to the bacterial flagellum basal body. This chain is Flagellar hook-basal body complex protein FliE, found in Salmonella newport (strain SL254).